A 356-amino-acid chain; its full sequence is D-alanine--D-alanine ligase (356 aa).

Positions 146–350 constitute an ATP-grasp domain; it reads KKLLVAEGLP…YAELLDTLIQ (205 aa). 173-228 contacts ATP; the sequence is KERLGLPVFVKPARGGSSIGVSKVSAWEDLEAALTLAYESDDKVLIEPEISGAEVE. The Mg(2+) site is built by D305, E317, and N319.

Belongs to the D-alanine--D-alanine ligase family. It depends on Mg(2+) as a cofactor. Requires Mn(2+) as cofactor.

It localises to the cytoplasm. The catalysed reaction is 2 D-alanine + ATP = D-alanyl-D-alanine + ADP + phosphate + H(+). It participates in cell wall biogenesis; peptidoglycan biosynthesis. Cell wall formation. This is D-alanine--D-alanine ligase from Corynebacterium aurimucosum (strain ATCC 700975 / DSM 44827 / CIP 107346 / CN-1) (Corynebacterium nigricans).